The chain runs to 193 residues: Interleukin-18 (193 aa).

The propeptide occupies 1-36 (MAAEPVEDNCINFVAMKFIDNTLYFIAEDDENLESD).

This sequence belongs to the IL-1 family. In terms of assembly, forms a ternary complex with ligand-binding receptor subunit IL18R1 and signaling receptor subunit IL18RAP at the plasma membrane. Mature IL18 first binds to IL18R1 forming a low affinity binary complex, which then interacts with IL18RAP to form a high affinity ternary complex that signals inside the cell. Interacts with cargo receptor TMED10; the interaction mediates the translocation from the cytoplasm into the ERGIC (endoplasmic reticulum-Golgi intermediate compartment) and thereby secretion. In terms of processing, the pro-IL-18 precursor is processed by CASP1, CASP4 or CASP5 to yield its mature, active form. The pro-IL-18 precursor features autoinhibitory interactions between the propeptide and the post-cleavage-site region, preventing recognition by the IL18R1 receptor. Processing by CASP1, CASP4 or CASP5 induces conformational changes to generate critical receptor-binding sites. The mature form is then secreted and released in the extracellular milieu by passing through the gasdermin-D (GSDMD) pore. In contrast, cleavage by CASP3 inactivates IL18. As to expression, expressed in ovarian carcinoma but undetectable in normal ovarian epithelial cells. Resistant to proteolytic activation by caspase-1 and -4.

Its subcellular location is the cytoplasm. The protein resides in the cytosol. It is found in the secreted. In terms of biological role, pro-inflammatory cytokine primarily involved in epithelial barrier repair, polarized T-helper 1 (Th1) cell and natural killer (NK) cell immune responses. Upon binding to IL18R1 and IL18RAP, forms a signaling ternary complex which activates NF-kappa-B, triggering synthesis of inflammatory mediators. Synergizes with IL12/interleukin-12 to induce IFNG synthesis from T-helper 1 (Th1) cells and natural killer (NK) cells. Involved in transduction of inflammation downstream of pyroptosis: its mature form is specifically released in the extracellular milieu by passing through the gasdermin-D (GSDMD) pore. The protein is Interleukin-18 of Homo sapiens (Human).